An 87-amino-acid polypeptide reads, in one-letter code: Small ribosomal subunit protein uS19 (87 aa).

The segment at 1–29 (MARSLKKGPFVDHHLQKKVDVQNKEGTKK) is disordered. Over residues 9-28 (PFVDHHLQKKVDVQNKEGTK) the composition is skewed to basic and acidic residues.

Belongs to the universal ribosomal protein uS19 family.

Functionally, protein S19 forms a complex with S13 that binds strongly to the 16S ribosomal RNA. This is Small ribosomal subunit protein uS19 from Protochlamydia amoebophila (strain UWE25).